A 140-amino-acid chain; its full sequence is Small ribosomal subunit protein uS12 (140 aa).

3-methylthioaspartic acid is present on Asp-102.

Belongs to the universal ribosomal protein uS12 family. Part of the 30S ribosomal subunit. Contacts proteins S8 and S17. May interact with IF1 in the 30S initiation complex.

Its function is as follows. With S4 and S5 plays an important role in translational accuracy. Interacts with and stabilizes bases of the 16S rRNA that are involved in tRNA selection in the A site and with the mRNA backbone. Located at the interface of the 30S and 50S subunits, it traverses the body of the 30S subunit contacting proteins on the other side and probably holding the rRNA structure together. The combined cluster of proteins S8, S12 and S17 appears to hold together the shoulder and platform of the 30S subunit. The protein is Small ribosomal subunit protein uS12 of Geobacillus stearothermophilus (Bacillus stearothermophilus).